Here is a 263-residue protein sequence, read N- to C-terminus: Post-GPI attachment to proteins factor 2 (263 aa).

Transmembrane regions (helical) follow at residues 16–36 (FVFC…LLSL), 69–89 (YIWR…AVAF), 109–129 (FLCN…LALT), 143–163 (CFGG…WLFS), 180–200 (YKIL…YLYW), and 208–228 (PGIY…NIFF).

Belongs to the PGAP2 family.

It is found in the golgi apparatus membrane. The protein localises to the endoplasmic reticulum membrane. Functionally, involved in the lipid remodeling steps of GPI-anchor maturation. Required for stable expression of GPI-anchored proteins at the cell surface. This chain is Post-GPI attachment to proteins factor 2, found in Caenorhabditis briggsae.